The sequence spans 430 residues: Adenylosuccinate synthetase (430 aa).

GTP contacts are provided by residues 12 to 18 (GDEGKGK) and 40 to 42 (GHT). Catalysis depends on Asp-13, which acts as the Proton acceptor. Mg(2+) is bound by residues Asp-13 and Gly-40. IMP contacts are provided by residues 13 to 16 (DEGK), 38 to 41 (NAGH), Thr-128, Arg-142, Gln-223, Thr-238, and Arg-302. His-41 (proton donor) is an active-site residue. Substrate is bound at residue 298–304 (TTTGRPR). GTP contacts are provided by residues Arg-304, 330 to 332 (SID), and 412 to 414 (SVG).

This sequence belongs to the adenylosuccinate synthetase family. Homodimer. Mg(2+) serves as cofactor.

It is found in the cytoplasm. It catalyses the reaction IMP + L-aspartate + GTP = N(6)-(1,2-dicarboxyethyl)-AMP + GDP + phosphate + 2 H(+). It participates in purine metabolism; AMP biosynthesis via de novo pathway; AMP from IMP: step 1/2. Its function is as follows. Plays an important role in the de novo pathway of purine nucleotide biosynthesis. Catalyzes the first committed step in the biosynthesis of AMP from IMP. In Exiguobacterium sibiricum (strain DSM 17290 / CCUG 55495 / CIP 109462 / JCM 13490 / 255-15), this protein is Adenylosuccinate synthetase.